Reading from the N-terminus, the 4639-residue chain is Dynein heavy chain, cytoplasmic (4639 aa).

A stem region spans residues Met1 to Phe1856. Coiled-coil stretches lie at residues Leu530–Gln565, Ser774–Ser794, and Asp1264–Arg1368. AAA stretches follow at residues Tyr1857 to Ser2084, Glu2166 to Leu2437, Glu2541 to Gly2790, and Val2884 to Thr3153. Residues Gly1895–Thr1902, Gly2210–Ser2217, Gly2580–Thr2587, and Gly2922–Thr2929 each bind ATP. Coiled-coil stretches lie at residues Gly3189–Lys3261, Ala3382–Thr3478, and Glu3723–Thr3782. The segment at Gly3189 to Thr3478 is stalk. AAA regions lie at residues Leu3539–Gln3768 and Ala3989–Thr4205.

It belongs to the dynein heavy chain family. In terms of assembly, consists of at least two heavy chains and a number of intermediate and light chains.

Its subcellular location is the cytoplasm. It localises to the cytoskeleton. In terms of biological role, cytoplasmic dynein acts as a motor for the intracellular retrograde motility of vesicles and organelles along microtubules. Dynein has ATPase activity; the force-producing power stroke is thought to occur on release of ADP. The sequence is that of Dynein heavy chain, cytoplasmic (Dhc64C) from Drosophila melanogaster (Fruit fly).